The following is a 388-amino-acid chain: Leucine aminopeptidase 1 (388 aa).

A signal peptide spans 1–19 (MKLPALLILGVAASTMVLA). The propeptide occupies 20-88 (AIAPDQVPLN…LPKVFPTPAV (69 aa)). 5 N-linked (GlcNAc...) asparagine glycosylation sites follow: Asn96, Asn119, Asn149, Asn164, and Asn181. Zn(2+) contacts are provided by His189 and Asp207. The N-linked (GlcNAc...) asparagine glycan is linked to Asn232. Zn(2+) is bound by residues Glu246 and Asp273. Cysteines 322 and 326 form a disulfide. Residue His355 participates in Zn(2+) binding.

It belongs to the peptidase M28 family. M28E subfamily. Monomer. It depends on Zn(2+) as a cofactor.

It localises to the secreted. Its function is as follows. Extracellular aminopeptidase that allows assimilation of proteinaceous substrates. In Paracoccidioides brasiliensis (strain Pb03), this protein is Leucine aminopeptidase 1 (LAP1).